A 674-amino-acid polypeptide reads, in one-letter code: DNA mismatch repair protein MutL (674 aa).

Belongs to the DNA mismatch repair MutL/HexB family.

This protein is involved in the repair of mismatches in DNA. It is required for dam-dependent methyl-directed DNA mismatch repair. May act as a 'molecular matchmaker', a protein that promotes the formation of a stable complex between two or more DNA-binding proteins in an ATP-dependent manner without itself being part of a final effector complex. In Clostridium perfringens (strain ATCC 13124 / DSM 756 / JCM 1290 / NCIMB 6125 / NCTC 8237 / Type A), this protein is DNA mismatch repair protein MutL.